Consider the following 247-residue polypeptide: TM2 domain-containing protein 3 (247 aa).

Residues 1 to 30 form the signal peptide; the sequence is MDLMMALKRVCRVLLFVTQMYVFSGRGSLS. Topologically, residues 31 to 179 are extracellular; that stretch reads FEYSQPVAQP…RTFPKMLYCN (149 aa). 6 N-linked (GlcNAc...) asparagine glycosylation sites follow: Asn87, Asn99, Asn139, Asn155, Asn169, and Asn179. The helical transmembrane segment at 180–200 threads the bilayer; that stretch reads WTGGYKWSTALALSITLGGFG. A TM2 domain is found at 183-231; sequence GYKWSTALALSITLGGFGADRFYLGQWREGLGKLFSFGGLGIWTLIDVF. The Cytoplasmic segment spans residues 201–215; sequence ADRFYLGQWREGLGK. Residues 216–236 traverse the membrane as a helical segment; it reads LFSFGGLGIWTLIDVFLISVG. At 237-247 the chain is on the extracellular side; it reads YVGPADGSLYI.

It belongs to the TM2 family.

It is found in the membrane. The chain is TM2 domain-containing protein 3 (tm2d3) from Xenopus laevis (African clawed frog).